We begin with the raw amino-acid sequence, 229 residues long: MRIAGAIKFVIAVALFLLTFYVISQVFEIKMYSNLGNIFARSAPDTVAHPTTKAPRYRCGISKVCPEKHFAFKIASGAANVVGPKICVDDNILMSGVKNNVGRGINTALVNGKTGALIETTYHDLWGGEVGPFIEFLKKIPDGTIVLMATYDDGATKLNDDARKRIAELGSSLISVLAFRDNWVFVGGKGIKTKSPFEQHIKNNKDTNKYEGWPEVVEMEGCIPQKINE.

The N-terminal stretch at 1–24 is a signal peptide; sequence MRIAGAIKFVIAVALFLLTFYVIS. 2 cysteine pairs are disulfide-bonded: C59/C87 and C65/C222. The 159-residue stretch at 68–226 folds into the GG-type lectin domain; the sequence is KHFAFKIASG…VEMEGCIPQK (159 aa).

It belongs to the FAM3 family.

Its subcellular location is the secreted. Involved in retinal laminar formation. The chain is Protein FAM3C (fam3c) from Xenopus tropicalis (Western clawed frog).